The sequence spans 337 residues: Glyceraldehyde-3-phosphate dehydrogenase 3 (337 aa).

NAD(+) contacts are provided by residues 12–13 (RM) and Lys-80. D-glyceraldehyde 3-phosphate contacts are provided by residues 152–154 (SCT) and Thr-183. Cys-153 serves as the catalytic Nucleophile. Asn-184 contributes to the NAD(+) binding site. Residues Arg-198, 211–212 (TG), and Arg-234 contribute to the D-glyceraldehyde 3-phosphate site. Residue Asn-317 coordinates NAD(+).

It belongs to the glyceraldehyde-3-phosphate dehydrogenase family. In terms of assembly, homotetramer.

The protein localises to the cytoplasm. It catalyses the reaction D-glyceraldehyde 3-phosphate + phosphate + NAD(+) = (2R)-3-phospho-glyceroyl phosphate + NADH + H(+). Its pathway is carbohydrate degradation; glycolysis; pyruvate from D-glyceraldehyde 3-phosphate: step 1/5. It participates in carbohydrate biosynthesis; gluconeogenesis. Functionally, catalyzes the oxidative phosphorylation of glyceraldehyde 3-phosphate (G3P) to 1,3-bisphosphoglycerate (BPG) using the cofactor NAD. The first reaction step involves the formation of a hemiacetal intermediate between G3P and a cysteine residue, and this hemiacetal intermediate is then oxidized to a thioester, with concomitant reduction of NAD to NADH. The reduced NADH is then exchanged with the second NAD, and the thioester is attacked by a nucleophilic inorganic phosphate to produce BPG. The chain is Glyceraldehyde-3-phosphate dehydrogenase 3 (gap3) from Nostoc sp. (strain PCC 7120 / SAG 25.82 / UTEX 2576).